We begin with the raw amino-acid sequence, 367 residues long: Beta sliding clamp (367 aa).

Belongs to the beta sliding clamp family. In terms of assembly, forms a ring-shaped head-to-tail homodimer around DNA which binds and tethers DNA polymerases and other proteins to the DNA. The DNA replisome complex has a single clamp-loading complex (3 tau and 1 each of delta, delta', psi and chi subunits) which binds 3 Pol III cores (1 core on the leading strand and 2 on the lagging strand) each with a beta sliding clamp dimer. Additional proteins in the replisome are other copies of gamma, psi and chi, Ssb, DNA helicase and RNA primase.

It is found in the cytoplasm. Functionally, confers DNA tethering and processivity to DNA polymerases and other proteins. Acts as a clamp, forming a ring around DNA (a reaction catalyzed by the clamp-loading complex) which diffuses in an ATP-independent manner freely and bidirectionally along dsDNA. Initially characterized for its ability to contact the catalytic subunit of DNA polymerase III (Pol III), a complex, multichain enzyme responsible for most of the replicative synthesis in bacteria; Pol III exhibits 3'-5' exonuclease proofreading activity. The beta chain is required for initiation of replication as well as for processivity of DNA replication. This Proteus mirabilis protein is Beta sliding clamp (dnaN).